The primary structure comprises 319 residues: RNA polymerase II holoenzyme cyclin-like subunit (319 aa).

A Cyclin N-terminal domain is found at 53 to 142 (QQLIRLAKRL…LGECEFFMIS (90 aa)). Low complexity predominate over residues 237-251 (QGQQAQGGMPEPAAA). Residues 237–261 (QGQQAQGGMPEPAAAEPKEKRQQDR) are disordered. The segment covering 252–261 (EPKEKRQQDR) has biased composition (basic and acidic residues).

The protein belongs to the cyclin family. Cyclin C subfamily. In terms of assembly, component of the SRB8-11 complex, a regulatory module of the Mediator complex. Interacts with SSN3/FCK1.

It is found in the nucleus. In terms of biological role, component of the SRB8-11 complex. The SRB8-11 complex is a regulatory module of the Mediator complex which is itself involved in regulation of basal and activated RNA polymerase II-dependent transcription. The SRB8-11 complex may be involved in the transcriptional repression of a subset of genes regulated by Mediator. It may inhibit the association of the Mediator complex with RNA polymerase II to form the holoenzyme complex. The SRB8-11 complex phosphorylates the C-terminal domain (CTD) of the largest subunit of RNA polymerase II. May play a role in signal transduction pathways regulating secondary metabolism and fungal development (conidiation). This chain is RNA polymerase II holoenzyme cyclin-like subunit (SSN8), found in Gibberella moniliformis (Maize ear and stalk rot fungus).